Consider the following 227-residue polypeptide: Cytochrome c oxidase subunit 2 (227 aa).

Residues 1 to 14 (MAYPMQLGFQDATS) lie on the Mitochondrial intermembrane side of the membrane. Residues 15–45 (PIMEELLHFHDHTLMIVLLISSLVLYIISLM) traverse the membrane as a helical segment. The Mitochondrial matrix segment spans residues 46–59 (LTTKLTHTSTMDAQ). A helical membrane pass occupies residues 60-87 (EVETIWTILPAIILILIALPSLRILYMM). Residues 88-227 (DEINNPSLTV…YFEKWSASML (140 aa)) are Mitochondrial intermembrane-facing. The Cu cation site is built by histidine 161, cysteine 196, glutamate 198, cysteine 200, histidine 204, and methionine 207. Glutamate 198 provides a ligand contact to Mg(2+). A Phosphotyrosine modification is found at tyrosine 218.

Belongs to the cytochrome c oxidase subunit 2 family. Component of the cytochrome c oxidase (complex IV, CIV), a multisubunit enzyme composed of 14 subunits. The complex is composed of a catalytic core of 3 subunits MT-CO1, MT-CO2 and MT-CO3, encoded in the mitochondrial DNA, and 11 supernumerary subunits COX4I, COX5A, COX5B, COX6A, COX6B, COX6C, COX7A, COX7B, COX7C, COX8 and NDUFA4, which are encoded in the nuclear genome. The complex exists as a monomer or a dimer and forms supercomplexes (SCs) in the inner mitochondrial membrane with NADH-ubiquinone oxidoreductase (complex I, CI) and ubiquinol-cytochrome c oxidoreductase (cytochrome b-c1 complex, complex III, CIII), resulting in different assemblies (supercomplex SCI(1)III(2)IV(1) and megacomplex MCI(2)III(2)IV(2)). Found in a complex with TMEM177, COA6, COX18, COX20, SCO1 and SCO2. Interacts with TMEM177 in a COX20-dependent manner. Interacts with COX20. Interacts with COX16. The cofactor is Cu cation.

It localises to the mitochondrion inner membrane. The enzyme catalyses 4 Fe(II)-[cytochrome c] + O2 + 8 H(+)(in) = 4 Fe(III)-[cytochrome c] + 2 H2O + 4 H(+)(out). Its function is as follows. Component of the cytochrome c oxidase, the last enzyme in the mitochondrial electron transport chain which drives oxidative phosphorylation. The respiratory chain contains 3 multisubunit complexes succinate dehydrogenase (complex II, CII), ubiquinol-cytochrome c oxidoreductase (cytochrome b-c1 complex, complex III, CIII) and cytochrome c oxidase (complex IV, CIV), that cooperate to transfer electrons derived from NADH and succinate to molecular oxygen, creating an electrochemical gradient over the inner membrane that drives transmembrane transport and the ATP synthase. Cytochrome c oxidase is the component of the respiratory chain that catalyzes the reduction of oxygen to water. Electrons originating from reduced cytochrome c in the intermembrane space (IMS) are transferred via the dinuclear copper A center (CU(A)) of subunit 2 and heme A of subunit 1 to the active site in subunit 1, a binuclear center (BNC) formed by heme A3 and copper B (CU(B)). The BNC reduces molecular oxygen to 2 water molecules using 4 electrons from cytochrome c in the IMS and 4 protons from the mitochondrial matrix. This Bubalus depressicornis (Lowland anoa) protein is Cytochrome c oxidase subunit 2 (MT-CO2).